A 331-amino-acid polypeptide reads, in one-letter code: Phenylalanine--tRNA ligase alpha subunit (331 aa).

Glu-252 contributes to the Mg(2+) binding site.

Belongs to the class-II aminoacyl-tRNA synthetase family. Phe-tRNA synthetase alpha subunit type 1 subfamily. As to quaternary structure, tetramer of two alpha and two beta subunits. It depends on Mg(2+) as a cofactor.

It is found in the cytoplasm. The enzyme catalyses tRNA(Phe) + L-phenylalanine + ATP = L-phenylalanyl-tRNA(Phe) + AMP + diphosphate + H(+). The chain is Phenylalanine--tRNA ligase alpha subunit from Xanthomonas oryzae pv. oryzae (strain MAFF 311018).